A 655-amino-acid polypeptide reads, in one-letter code: Acetyl-coenzyme A synthetase (655 aa).

CoA is bound by residues Arg-196–Lys-199 and Thr-316. ATP contacts are provided by residues Gly-392–Pro-394, Asp-416–Thr-421, Asp-507, and Arg-522. Ser-530 is a CoA binding site. Arg-533 serves as a coordination point for ATP. Mg(2+) is bound by residues Val-544 and Val-549. Lys-619 carries the post-translational modification N6-acetyllysine.

It belongs to the ATP-dependent AMP-binding enzyme family. Mg(2+) is required as a cofactor. Post-translationally, acetylated. Deacetylation by the SIR2-homolog deacetylase activates the enzyme.

The catalysed reaction is acetate + ATP + CoA = acetyl-CoA + AMP + diphosphate. Catalyzes the conversion of acetate into acetyl-CoA (AcCoA), an essential intermediate at the junction of anabolic and catabolic pathways. AcsA undergoes a two-step reaction. In the first half reaction, AcsA combines acetate with ATP to form acetyl-adenylate (AcAMP) intermediate. In the second half reaction, it can then transfer the acetyl group from AcAMP to the sulfhydryl group of CoA, forming the product AcCoA. This Thiobacillus denitrificans (strain ATCC 25259 / T1) protein is Acetyl-coenzyme A synthetase.